The following is a 319-amino-acid chain: Very-long-chain 3-oxoacyl-CoA reductase-A (319 aa).

The chain crosses the membrane as a helical span at residues Leu-17 to Ile-37. Residue Gly-56 to Leu-85 coordinates NADP(+). 2 consecutive transmembrane segments (helical) span residues Gly-188–Tyr-208 and Ala-282–Leu-302. Ser-195 contacts substrate. Tyr-208 serves as the catalytic Proton acceptor.

This sequence belongs to the short-chain dehydrogenases/reductases (SDR) family. 17-beta-HSD 3 subfamily.

It localises to the endoplasmic reticulum membrane. The enzyme catalyses a very-long-chain (3R)-3-hydroxyacyl-CoA + NADP(+) = a very-long-chain 3-oxoacyl-CoA + NADPH + H(+). The catalysed reaction is 17beta-estradiol + NAD(+) = estrone + NADH + H(+). It catalyses the reaction 17beta-estradiol + NADP(+) = estrone + NADPH + H(+). The protein operates within lipid metabolism; fatty acid biosynthesis. It functions in the pathway steroid biosynthesis; estrogen biosynthesis. Its function is as follows. Catalyzes the second of the four reactions of the long-chain fatty acids elongation cycle. This endoplasmic reticulum-bound enzymatic process, allows the addition of two carbons to the chain of long- and very long-chain fatty acids/VLCFAs per cycle. This enzyme has a 3-ketoacyl-CoA reductase activity, reducing 3-ketoacyl-CoA to 3-hydroxyacyl-CoA, within each cycle of fatty acid elongation. Thereby, it may participate in the production of VLCFAs of different chain lengths that are involved in multiple biological processes as precursors of membrane lipids and lipid mediators. May also catalyze the transformation of estrone (E1) into estradiol (E2) and play a role in estrogen formation. This is Very-long-chain 3-oxoacyl-CoA reductase-A (hsd17b12a) from Danio rerio (Zebrafish).